A 327-amino-acid polypeptide reads, in one-letter code: GTPase Obg (327 aa).

Residues methionine 1–isoleucine 159 form the Obg domain. An OBG-type G domain is found at alanine 160 to serine 327. Residues glycine 166–serine 173, phenylalanine 191–asparagine 195, aspartate 212–glycine 215, asparagine 279–aspartate 282, and serine 308–leucine 310 contribute to the GTP site. Serine 173 and threonine 193 together coordinate Mg(2+).

Belongs to the TRAFAC class OBG-HflX-like GTPase superfamily. OBG GTPase family. Monomer. The cofactor is Mg(2+).

It is found in the cytoplasm. Its function is as follows. An essential GTPase which binds GTP, GDP and possibly (p)ppGpp with moderate affinity, with high nucleotide exchange rates and a fairly low GTP hydrolysis rate. Plays a role in control of the cell cycle, stress response, ribosome biogenesis and in those bacteria that undergo differentiation, in morphogenesis control. In Pelagibacter ubique (strain HTCC1062), this protein is GTPase Obg.